The following is a 315-amino-acid chain: MPEQKAPQDLQLILDDIYRELTPRLGEGKVADYIPQLARVNPQHFGMAIVTTGGEVHRVGDAEVPFSIQSISKVFTLTLALGKHGENIWHRVGREPSGSAFNSIVQLEHEGGKPRNPFINAGAITISDLILAGHTPKELIGEIVRFVRYLADDENIVIDHEVARSETVTGFRNFALASFMRSFGRLDHPVEHVLGVYFHHCALAMTCSQLAKAGLFLAAGGTNPLTGHSVVSRQRARRINALMLTCGHYDGSGDFAYRVGLPGKSGVGGGIMAVAPGKASIAVWSPGLNENGNSLLGSLALEMLAARTGWSVFGP.

Positions 70, 120, 166, 173, 197, 249, and 267 each coordinate substrate.

It belongs to the glutaminase family. As to quaternary structure, homotetramer.

It carries out the reaction L-glutamine + H2O = L-glutamate + NH4(+). In Sinorhizobium fredii (strain NBRC 101917 / NGR234), this protein is Glutaminase.